A 357-amino-acid chain; its full sequence is DNA integrity scanning protein DisA (357 aa).

In terms of domain architecture, DAC spans 3-141; the sequence is RPTLRETVAR…GGERHVVADS (139 aa). ATP is bound by residues Gly-70, Leu-88, and 101-105; that span reads TRHRS.

This sequence belongs to the DisA family. As to quaternary structure, homooctamer. Requires Mg(2+) as cofactor.

It catalyses the reaction 2 ATP = 3',3'-c-di-AMP + 2 diphosphate. Its function is as follows. Participates in a DNA-damage check-point. DisA forms globular foci that rapidly scan along the chromosomes searching for lesions. Functionally, also has diadenylate cyclase activity, catalyzing the condensation of 2 ATP molecules into cyclic di-AMP (c-di-AMP). c-di-AMP likely acts as a signaling molecule that may couple DNA integrity with a cellular process. The polypeptide is DNA integrity scanning protein DisA (Mycolicibacterium paratuberculosis (strain ATCC BAA-968 / K-10) (Mycobacterium paratuberculosis)).